We begin with the raw amino-acid sequence, 354 residues long: Membrane progestin receptor beta (354 aa).

Residues Met1–Glu75 are Cytoplasmic-facing. The helical transmembrane segment at Val76 to Phe96 threads the bilayer. At Val97–Pro111 the chain is on the extracellular side. The helical transmembrane segment at Leu112–Leu132 threads the bilayer. The Cytoplasmic portion of the chain corresponds to Gln133–Arg174. A helical transmembrane segment spans residues Phe175–Cys195. Over Tyr196–Gln213 the chain is Extracellular. A helical transmembrane segment spans residues Val214 to Leu234. The Cytoplasmic portion of the chain corresponds to Cys235–Gln243. Residues Ala244–Cys264 form a helical membrane-spanning segment. Over Pro265–Gln283 the chain is Extracellular. The chain crosses the membrane as a helical span at residues Ile284–Tyr304. At Lys305–Ser319 the chain is on the cytoplasmic side. A helical membrane pass occupies residues Ile320–Leu340. Topologically, residues Leu341 to Ser354 are extracellular.

Belongs to the ADIPOR family.

The protein resides in the cell membrane. Functionally, steroid membrane receptor. Binds progesterone. May be involved in oocyte maturation. The chain is Membrane progestin receptor beta (PAQR8) from Sus scrofa (Pig).